Here is a 284-residue protein sequence, read N- to C-terminus: Diaminopimelate epimerase (284 aa).

Substrate contacts are provided by Asn14 and Asn67. Catalysis depends on Cys76, which acts as the Proton donor. Residues 77–78, Asn166, Asn199, and 217–218 contribute to the substrate site; these read GN and ER. Cys226 acts as the Proton acceptor in catalysis. 227–228 serves as a coordination point for substrate; it reads GT.

The protein belongs to the diaminopimelate epimerase family. Homodimer.

It is found in the cytoplasm. The enzyme catalyses (2S,6S)-2,6-diaminopimelate = meso-2,6-diaminopimelate. It participates in amino-acid biosynthesis; L-lysine biosynthesis via DAP pathway; DL-2,6-diaminopimelate from LL-2,6-diaminopimelate: step 1/1. Its function is as follows. Catalyzes the stereoinversion of LL-2,6-diaminopimelate (L,L-DAP) to meso-diaminopimelate (meso-DAP), a precursor of L-lysine and an essential component of the bacterial peptidoglycan. This chain is Diaminopimelate epimerase, found in Bacillus velezensis (strain DSM 23117 / BGSC 10A6 / LMG 26770 / FZB42) (Bacillus amyloliquefaciens subsp. plantarum).